We begin with the raw amino-acid sequence, 338 residues long: Glycerol-3-phosphate dehydrogenase [NAD(P)+] (338 aa).

NADPH is bound by residues tryptophan 11, arginine 30, and lysine 107. Sn-glycerol 3-phosphate-binding residues include lysine 107, glycine 140, and serine 142. Alanine 144 contributes to the NADPH binding site. Sn-glycerol 3-phosphate-binding residues include lysine 195, aspartate 248, serine 258, arginine 259, and asparagine 260. Lysine 195 serves as the catalytic Proton acceptor. NADPH is bound at residue arginine 259. 2 residues coordinate NADPH: valine 283 and glutamate 285.

Belongs to the NAD-dependent glycerol-3-phosphate dehydrogenase family.

It localises to the cytoplasm. The catalysed reaction is sn-glycerol 3-phosphate + NAD(+) = dihydroxyacetone phosphate + NADH + H(+). The enzyme catalyses sn-glycerol 3-phosphate + NADP(+) = dihydroxyacetone phosphate + NADPH + H(+). It functions in the pathway membrane lipid metabolism; glycerophospholipid metabolism. Functionally, catalyzes the reduction of the glycolytic intermediate dihydroxyacetone phosphate (DHAP) to sn-glycerol 3-phosphate (G3P), the key precursor for phospholipid synthesis. The chain is Glycerol-3-phosphate dehydrogenase [NAD(P)+] from Ralstonia nicotianae (strain ATCC BAA-1114 / GMI1000) (Ralstonia solanacearum).